Reading from the N-terminus, the 113-residue chain is Fruiting body-specific class I hydrophobin fbh1 (113 aa).

The signal sequence occupies residues 1-20 (MFSIRIATVVLAASALLAAA). Intrachain disulfides connect Cys33–Cys92, Cys40–Cys86, Cys41–Cys73, and Cys93–Cys106.

It belongs to the fungal hydrophobin family. Self-assembles to form functional amyloid fibrils called rodlets. Self-assembly into fibrillar rodlets occurs spontaneously at hydrophobic:hydrophilic interfaces and the rodlets further associate laterally to form amphipathic monolayers.

It localises to the secreted. The protein localises to the cell wall. In terms of biological role, aerial growth, conidiation, and dispersal of filamentous fungi in the environment rely upon a capability of their secreting small amphipathic proteins called hydrophobins (HPBs) with low sequence identity. Class I can self-assemble into an outermost layer of rodlet bundles on aerial cell surfaces, conferring cellular hydrophobicity that supports fungal growth, development and dispersal; whereas Class II form highly ordered films at water-air interfaces through intermolecular interactions but contribute nothing to the rodlet structure. Fbh1 is a fruiting body-specific class I hydrophobin that is involved in the growth rate and primordia formation. This Pleurotus ostreatus (strain PC15) (Oyster mushroom) protein is Fruiting body-specific class I hydrophobin fbh1.